Here is a 335-residue protein sequence, read N- to C-terminus: Methionine import ATP-binding protein MetN 2 (335 aa).

The ABC transporter domain occupies 2–242 (IEFHNVHKTY…PQHSTTKRFV (241 aa)). Residue 38–45 (GHSGAGKS) participates in ATP binding.

It belongs to the ABC transporter superfamily. Methionine importer (TC 3.A.1.24) family. In terms of assembly, the complex is composed of two ATP-binding proteins (MetN), two transmembrane proteins (MetI) and a solute-binding protein (MetQ).

The protein resides in the cell inner membrane. It carries out the reaction L-methionine(out) + ATP + H2O = L-methionine(in) + ADP + phosphate + H(+). The enzyme catalyses D-methionine(out) + ATP + H2O = D-methionine(in) + ADP + phosphate + H(+). Its function is as follows. Part of the ABC transporter complex MetNIQ involved in methionine import. Responsible for energy coupling to the transport system. This chain is Methionine import ATP-binding protein MetN 2, found in Pseudomonas syringae pv. tomato (strain ATCC BAA-871 / DC3000).